Reading from the N-terminus, the 181-residue chain is Lipoprotein signal peptidase (181 aa).

3 helical membrane-spanning segments follow: residues 25-45, 86-106, and 107-127; these read LFYK…QVFI, LVYF…VFMV, and KYSY…NFFD. Active-site residues include aspartate 138 and aspartate 153. A helical transmembrane segment spans residues 149–169; it reads FNFADCCITFGFIGLFFCFLI.

It belongs to the peptidase A8 family.

It localises to the cell membrane. The catalysed reaction is Release of signal peptides from bacterial membrane prolipoproteins. Hydrolyzes -Xaa-Yaa-Zaa-|-(S,diacylglyceryl)Cys-, in which Xaa is hydrophobic (preferably Leu), and Yaa (Ala or Ser) and Zaa (Gly or Ala) have small, neutral side chains.. The protein operates within protein modification; lipoprotein biosynthesis (signal peptide cleavage). Functionally, this protein specifically catalyzes the removal of signal peptides from prolipoproteins. This is Lipoprotein signal peptidase from Mycoplasma genitalium (strain ATCC 33530 / DSM 19775 / NCTC 10195 / G37) (Mycoplasmoides genitalium).